Reading from the N-terminus, the 460-residue chain is MAVSLWQQCIGRLQDELSAQQFSMWIRPLQAEMDGDTLVLYAPNRFVLDWVRDKYINIINQFFTEQMGNDAPKLRFDIGSRPSAKKPEPAPVAAVRVPNPQTKASVGTSFNTTEPVANTNHRSNINPTYQFDNFVEGKSNQLGKAAALQVAENPGGAYNPLFLYGGTGLGKTHLLHAVGNGIIKNNPNAKVVYMHSERFVQDMVKALQNNAIEEFKRYYRSVDALFIDDIQFFANKDRSQEEFFHTFNALLEGNHQIILTSDRYPKEIDGVEDRLKSRFGWGLTVAIEPPELETRVAILMRKAQESGINLPDEVAFFIAKRLRSNVRELEGALNRVIANANFTGRPITIDFVREALRDLLALQEKLVTIDNIQKTVAEYYKIKMADMLSKRRSRSVARPRQVAMALSKELTNQSLPEIGDAFGGRDHTTVLHACRKIAQLREESHDIKEDYANLIRTLSS.

A domain I, interacts with DnaA modulators region spans residues 1 to 84 (MAVSLWQQCI…RFDIGSRPSA (84 aa)). Positions 84-123 (AKKPEPAPVAAVRVPNPQTKASVGTSFNTTEPVANTNHRS) are domain II. Residues 103 to 123 (KASVGTSFNTTEPVANTNHRS) form a disordered region. The segment at 124 to 340 (NINPTYQFDN…GALNRVIANA (217 aa)) is domain III, AAA+ region. Residues Gly-168, Gly-170, Lys-171, and Thr-172 each contribute to the ATP site. Residues 341 to 460 (NFTGRPITID…YANLIRTLSS (120 aa)) are domain IV, binds dsDNA.

Belongs to the DnaA family. As to quaternary structure, oligomerizes as a right-handed, spiral filament on DNA at oriC.

The protein resides in the cytoplasm. Its function is as follows. Plays an essential role in the initiation and regulation of chromosomal replication. ATP-DnaA binds to the origin of replication (oriC) to initiate formation of the DNA replication initiation complex once per cell cycle. Binds the DnaA box (a 9 base pair repeat at the origin) and separates the double-stranded (ds)DNA. Forms a right-handed helical filament on oriC DNA; dsDNA binds to the exterior of the filament while single-stranded (ss)DNA is stabiized in the filament's interior. The ATP-DnaA-oriC complex binds and stabilizes one strand of the AT-rich DNA unwinding element (DUE), permitting loading of DNA polymerase. After initiation quickly degrades to an ADP-DnaA complex that is not apt for DNA replication. Binds acidic phospholipids. The polypeptide is Chromosomal replication initiator protein DnaA (Shewanella sp. (strain MR-4)).